The chain runs to 390 residues: Purine permease 21 (390 aa).

Residues 12 to 34 (QQGKEPIPTDQDERSSVSGSQTK) are disordered. Helical transmembrane passes span 44–64 (WLRVAIYTFFVISGQSVATIL), 78–98 (LATVVQLVGFPILLPYHLLSV), 118–138 (LVYIVLGLLVGAACYLYSIGL), 140–160 (YLPVSTLSLICASQLAFTAFF), 169–189 (LTPIILNSLFLLTISSTLLAF), 204–224 (YVKGFVCTVGASAGFGLLLSL), 241–261 (VINMIIYMSLVASCVSVVGLF), 287–307 (LVWTAVTWQVFSIGCTGLIFE), 312–332 (FSNAISALGLPVVPILAVIIF), and 336–356 (MNGLKVISMILAIWGFVSYVY). Positions 367–390 (KSNEIPTTESPDRPEAEGSSEQSK) are disordered.

This sequence belongs to the purine permeases (TC 2.A.7.14) family. Expressed in mesophyll cells.

Its subcellular location is the membrane. This is Purine permease 21 from Arabidopsis thaliana (Mouse-ear cress).